The chain runs to 412 residues: Imidazolonepropionase (412 aa).

The Fe(3+) site is built by histidine 76 and histidine 78. Zn(2+) is bound by residues histidine 76 and histidine 78. Arginine 85, tyrosine 148, and histidine 181 together coordinate 4-imidazolone-5-propanoate. Tyrosine 148 lines the N-formimidoyl-L-glutamate pocket. Histidine 242 contacts Fe(3+). A Zn(2+)-binding site is contributed by histidine 242. Glutamate 245 serves as a coordination point for 4-imidazolone-5-propanoate. Position 317 (aspartate 317) interacts with Fe(3+). Aspartate 317 contacts Zn(2+). Residues asparagine 319 and glycine 321 each coordinate N-formimidoyl-L-glutamate. Serine 322 serves as a coordination point for 4-imidazolone-5-propanoate.

The protein belongs to the metallo-dependent hydrolases superfamily. HutI family. The cofactor is Zn(2+). Fe(3+) is required as a cofactor.

The protein resides in the cytoplasm. It carries out the reaction 4-imidazolone-5-propanoate + H2O = N-formimidoyl-L-glutamate. Its pathway is amino-acid degradation; L-histidine degradation into L-glutamate; N-formimidoyl-L-glutamate from L-histidine: step 3/3. In terms of biological role, catalyzes the hydrolytic cleavage of the carbon-nitrogen bond in imidazolone-5-propanoate to yield N-formimidoyl-L-glutamate. It is the third step in the universal histidine degradation pathway. In Staphylococcus saprophyticus subsp. saprophyticus (strain ATCC 15305 / DSM 20229 / NCIMB 8711 / NCTC 7292 / S-41), this protein is Imidazolonepropionase.